The following is a 360-amino-acid chain: MNNQGGDEIGKLFVGGLDWSTTQETLRSYFSQYGEVVDCVIMKDKTTNQSRGFGFVKFKDPNCVGTVLASRPHTLDGRNIDPKPCTPRGMQPERSRPREGWQQKEPRTENSRSNKIFVGGIPHNCGETELKEYFNRFGVVTEVVMIYDAEKQRPRGFGFITFEDEQSVDQAVNMHFHDIMGKKVEVKRAEPRDSKSQTPGPPGSNQWGSRAMQSTANGWTGQPPQTWQGYSPQGMWMPTGQTIGGYGQPAGRGGPPPPPSFAPFLVSTTPGPFPPPQGFPPGYATPPPFGYGYGPPPPPPDQFVSSGVPPPPGTPGAAPLAFPPPPGQSAQDLSKPPSGQQDFPFSQFGNACFVKLSEWI.

RRM domains lie at 10–97 (GKLF…RSRP) and 114–191 (NKIF…RAEP). Disordered regions lie at residues 73–116 (HTLD…SNKI) and 184–345 (VEVK…DFPF). Basic and acidic residues-rich tracts occupy residues 91-112 (QPER…ENSR) and 184-195 (VEVKRAEPRDSK). Over residues 203–231 (GSNQWGSRAMQSTANGWTGQPPQTWQGYS) the composition is skewed to polar residues. Positions 242 to 253 (TIGGYGQPAGRG) are enriched in gly residues. The segment covering 271-301 (GPFPPPQGFPPGYATPPPFGYGYGPPPPPPD) has biased composition (pro residues). Residues 328-345 (QSAQDLSKPPSGQQDFPF) are compositionally biased toward polar residues.

As to quaternary structure, component of a mRNP complex, at least composed of DAZAP1, IGF2BP3-A, STAU and VgRBP60. Binds to the 3'-UTR of Vg1 mRNA. Interacts with profilin, a protein involved in actin assembly. Interacts with VgRBP71. Expressed in oocytes.

Its subcellular location is the cytoplasm. Functionally, RNA-binding protein, which is required during gametogenesis. May be involved in the actin-dependent anchoring of Vg1 mRNA in the vegetal cortex of the oocyte. The polypeptide is DAZ-associated protein 1 (dazap1) (Xenopus laevis (African clawed frog)).